The following is an 823-amino-acid chain: Lon protease (823 aa).

In terms of domain architecture, Lon N-terminal spans 51-246 (IPILPLRNMV…RLLFILNREY (196 aa)). Residue 397 to 404 (GPPGVGKT) coordinates ATP. The region spanning 633 to 815 (NDYAGVVTGL…QQVVDLALLR (183 aa)) is the Lon proteolytic domain. Active-site residues include S721 and K764.

The protein belongs to the peptidase S16 family. In terms of assembly, homohexamer. Organized in a ring with a central cavity.

It is found in the cytoplasm. The catalysed reaction is Hydrolysis of proteins in presence of ATP.. Its function is as follows. ATP-dependent serine protease that mediates the selective degradation of mutant and abnormal proteins as well as certain short-lived regulatory proteins. Required for cellular homeostasis and for survival from DNA damage and developmental changes induced by stress. Degrades polypeptides processively to yield small peptide fragments that are 5 to 10 amino acids long. Binds to DNA in a double-stranded, site-specific manner. The protein is Lon protease of Parabacteroides distasonis (strain ATCC 8503 / DSM 20701 / CIP 104284 / JCM 5825 / NCTC 11152).